A 544-amino-acid polypeptide reads, in one-letter code: Chaperonin GroEL (544 aa).

Residues 29–32 (TLGP), 86–90 (DGTTT), Gly-413, 476–478 (NAA), and Asp-492 contribute to the ATP site.

Belongs to the chaperonin (HSP60) family. As to quaternary structure, forms a cylinder of 14 subunits composed of two heptameric rings stacked back-to-back. Interacts with the co-chaperonin GroES.

The protein localises to the cytoplasm. The catalysed reaction is ATP + H2O + a folded polypeptide = ADP + phosphate + an unfolded polypeptide.. Functionally, together with its co-chaperonin GroES, plays an essential role in assisting protein folding. The GroEL-GroES system forms a nano-cage that allows encapsulation of the non-native substrate proteins and provides a physical environment optimized to promote and accelerate protein folding. This is Chaperonin GroEL from Bacillus cereus (strain B4264).